Reading from the N-terminus, the 134-residue chain is Arsenate reductase (134 aa).

Residues C11, C83, and C90 each act as nucleophile in the active site. Intrachain disulfides connect C11–C83 and C83–C90.

Belongs to the low molecular weight phosphotyrosine protein phosphatase family. Thioredoxin-coupled ArsC subfamily.

It is found in the cytoplasm. It carries out the reaction arsenate + [thioredoxin]-dithiol + H(+) = arsenite + [thioredoxin]-disulfide + H2O. Functionally, catalyzes the reduction of arsenate [As(V)] to arsenite [As(III)]. This chain is Arsenate reductase, found in Bacillus anthracis (strain A0248).